A 248-amino-acid chain; its full sequence is Coenzyme F420:L-glutamate ligase (248 aa).

Residues 15 to 18 (IPLI), 45 to 46 (ET), and Lys50 contribute to the GTP site. Position 115 (Asp115) interacts with a divalent metal cation. Asn118 is a binding site for GTP. 3 residues coordinate a divalent metal cation: Asp155, Ser156, and Gln213. 211-218 (MGQSNEGI) lines the GTP pocket.

This sequence belongs to the CofE family. Homodimer. It depends on Mg(2+) as a cofactor. Mn(2+) is required as a cofactor. Requires K(+) as cofactor.

It catalyses the reaction oxidized coenzyme F420-0 + GTP + L-glutamate = oxidized coenzyme F420-1 + GDP + phosphate + H(+). It carries out the reaction oxidized coenzyme F420-1 + GTP + L-glutamate = oxidized coenzyme F420-2 + GDP + phosphate + H(+). The protein operates within cofactor biosynthesis; coenzyme F420 biosynthesis. Its function is as follows. Catalyzes the GTP-dependent successive addition of two or more gamma-linked L-glutamates to the L-lactyl phosphodiester of 7,8-didemethyl-8-hydroxy-5-deazariboflavin (F420-0) to form coenzyme F420-0-glutamyl-glutamate (F420-2) or polyglutamated F420 derivatives. The protein is Coenzyme F420:L-glutamate ligase of Methanococcus maripaludis (strain DSM 14266 / JCM 13030 / NBRC 101832 / S2 / LL).